The chain runs to 497 residues: Gasdermin-E (497 aa).

The interval 1-56 (MFAKATRSFLREVDAEGDLIAVSNLNDSDKSQLLSLVTKKKRFWCWQRPKYQFLSV) is membrane targeting domain. S-(2-succinyl)cysteine is present on C45. A Glycyl lysine isopeptide (Lys-Gly) (interchain with G-Cter in ubiquitin) cross-link involves residue K120. 3 positions are modified to S-(2-succinyl)cysteine: C156, C168, and C180. K189 is covalently cross-linked (Glycyl lysine isopeptide (Lys-Gly) (interchain with G-Cter in ubiquitin)). An S-(2-succinyl)cysteine mark is found at C235, C371, C409, C418, and C491.

This sequence belongs to the gasdermin family. Homooligomer; homooligomeric ring-shaped pore complex containing 27-28 subunits when inserted in the membrane. Post-translationally, cleavage at Asp-270 by CASP3 (mature and uncleaved precursor forms) or granzyme B (GZMB) relieves autoinhibition and is sufficient to initiate pyroptosis. Succination by the Krebs cycle intermediate fumarate, which leads to S-(2-succinyl)cysteine residues, inhibits processing by caspases, and ability to initiate pyroptosis. Succination modification is catalyzed by a non-enzymatic reaction caused by an accumulation of fumarate. In terms of processing, ubiquitinated on Lys-120 and Lys-189 via 'Lys-48'-linked polyubiquitin chains, leading to proteasomal degradation. Deubiquitinated by USP48, leading to increased stability. Post-translationally, palmitoylated.

It localises to the cell membrane. It is found in the cytoplasm. Its subcellular location is the cytosol. With respect to regulation, the full-length protein before cleavage is inactive: intramolecular interactions between N- and C-terminal domains mediate autoinhibition in the absence of activation signal. The intrinsic pyroptosis-inducing activity is carried by the released N-terminal moiety (Gasdermin-E, N-terminal) following cleavage by CASP3 or granzyme B (GZMB). Activated by NLRP1 in the absence of GSDMD expression: NLRP1 cleaves and activates CASP8, promoting downstream activation of CASP3 and subsequent activation of GSDME. In terms of biological role, precursor of a pore-forming protein that converts non-inflammatory apoptosis to pyroptosis. This form constitutes the precursor of the pore-forming protein: upon cleavage, the released N-terminal moiety (Gasdermin-E, N-terminal) binds to membranes and forms pores, triggering pyroptosis. Its function is as follows. Pore-forming protein produced by cleavage by CASP3 or granzyme B (GZMB), which converts non-inflammatory apoptosis to pyroptosis or promotes granzyme-mediated pyroptosis, respectively. After cleavage, moves to the plasma membrane, homooligomerizes within the membrane and forms pores of 10-15 nanometers (nm) of inner diameter, allowing the release of mature interleukins (IL1B and IL16) and triggering pyroptosis. Binds to inner leaflet lipids, bisphosphorylated phosphatidylinositols, such as phosphatidylinositol (4,5)-bisphosphate. Cleavage by CASP3 switches CASP3-mediated apoptosis induced by TNF or danger signals, such as chemotherapy drugs, to pyroptosis. Mediates secondary necrosis downstream of the mitochondrial apoptotic pathway and CASP3 activation as well as in response to viral agents. Exhibits bactericidal activity. Cleavage by GZMB promotes tumor suppressor activity by triggering robust anti-tumor immunity. Suppresses tumors by mediating granzyme-mediated pyroptosis in target cells of natural killer (NK) cells: cleavage by granzyme B (GZMB), delivered to target cells from NK-cells, triggers pyroptosis of tumor cells and tumor suppression. May play a role in the p53/TP53-regulated cellular response to DNA damage. The protein is Gasdermin-E of Equus caballus (Horse).